The chain runs to 166 residues: Phosphopantetheine adenylyltransferase (166 aa).

Position 9 (T9) interacts with substrate. ATP-binding positions include 9 to 10 and H17; that span reads TF. Substrate contacts are provided by K41, L78, and R92. Residues 93 to 95, E103, and 128 to 134 contribute to the ATP site; these read GLR and HQAIASK.

The protein belongs to the bacterial CoaD family. Homohexamer. Mg(2+) is required as a cofactor.

It localises to the cytoplasm. It carries out the reaction (R)-4'-phosphopantetheine + ATP + H(+) = 3'-dephospho-CoA + diphosphate. Its pathway is cofactor biosynthesis; coenzyme A biosynthesis; CoA from (R)-pantothenate: step 4/5. Reversibly transfers an adenylyl group from ATP to 4'-phosphopantetheine, yielding dephospho-CoA (dPCoA) and pyrophosphate. This chain is Phosphopantetheine adenylyltransferase, found in Roseobacter denitrificans (strain ATCC 33942 / OCh 114) (Erythrobacter sp. (strain OCh 114)).